The following is a 125-amino-acid chain: Prefoldin subunit beta (125 aa).

This sequence belongs to the prefoldin subunit beta family. As to quaternary structure, heterohexamer of two alpha and four beta subunits.

The protein localises to the cytoplasm. Functionally, molecular chaperone capable of stabilizing a range of proteins. Seems to fulfill an ATP-independent, HSP70-like function in archaeal de novo protein folding. The sequence is that of Prefoldin subunit beta from Pyrobaculum islandicum (strain DSM 4184 / JCM 9189 / GEO3).